The chain runs to 330 residues: DNA-directed RNA polymerase subunit alpha (330 aa).

Positions 1–231 (MQTNLLKPKA…EQLAVFAQLE (231 aa)) are alpha N-terminal domain (alpha-NTD). The tract at residues 250–330 (FDPILLRPVD…NWPPAGLDKR (81 aa)) is alpha C-terminal domain (alpha-CTD).

Belongs to the RNA polymerase alpha chain family. In terms of assembly, homodimer. The RNAP catalytic core consists of 2 alpha, 1 beta, 1 beta' and 1 omega subunit. When a sigma factor is associated with the core the holoenzyme is formed, which can initiate transcription.

The catalysed reaction is RNA(n) + a ribonucleoside 5'-triphosphate = RNA(n+1) + diphosphate. Its function is as follows. DNA-dependent RNA polymerase catalyzes the transcription of DNA into RNA using the four ribonucleoside triphosphates as substrates. The polypeptide is DNA-directed RNA polymerase subunit alpha (Acidovorax ebreus (strain TPSY) (Diaphorobacter sp. (strain TPSY))).